The chain runs to 315 residues: Ribosomal RNA small subunit methyltransferase H (315 aa).

S-adenosyl-L-methionine-binding positions include 37 to 39, Asp-57, Phe-83, Asp-105, and Gln-112; that span reads GGH.

This sequence belongs to the methyltransferase superfamily. RsmH family.

It is found in the cytoplasm. It catalyses the reaction cytidine(1402) in 16S rRNA + S-adenosyl-L-methionine = N(4)-methylcytidine(1402) in 16S rRNA + S-adenosyl-L-homocysteine + H(+). In terms of biological role, specifically methylates the N4 position of cytidine in position 1402 (C1402) of 16S rRNA. This chain is Ribosomal RNA small subunit methyltransferase H, found in Pseudomonas fluorescens (strain ATCC BAA-477 / NRRL B-23932 / Pf-5).